The primary structure comprises 165 residues: uncharacterized protein (165 aa).

Residues 7–29 (YPLIFTAFLLIAFCLIFFSYHLI) traverse the membrane as a helical segment.

The protein localises to the membrane. This is an uncharacterized protein from Bacillus subtilis (strain 168).